A 270-amino-acid polypeptide reads, in one-letter code: Non-structural maintenance of chromosomes element 1 homolog (270 aa).

The segment at 185–226 (CNVCHKIAIQCQLCENCGIPLHLQCAGIYFRGIANPLCPNCK) adopts an RING-type; atypical zinc-finger fold. The tract at residues 236-270 (LSQVSSQGPSHSQAAPVRGRNQRSRNISTVARTSR) is disordered. Polar residues-rich tracts occupy residues 237 to 248 (SQVSSQGPSHSQ) and 259 to 270 (SRNISTVARTSR).

Belongs to the NSE1 family. As to quaternary structure, component of the SMC5-SMC6 complex.

It localises to the nucleus. The protein localises to the chromosome. Its subcellular location is the telomere. The enzyme catalyses S-ubiquitinyl-[E2 ubiquitin-conjugating enzyme]-L-cysteine + [acceptor protein]-L-lysine = [E2 ubiquitin-conjugating enzyme]-L-cysteine + N(6)-ubiquitinyl-[acceptor protein]-L-lysine.. Its function is as follows. RING-type zinc finger-containing E3 ubiquitin ligase that assembles with melanoma antigen protein (MAGE) to catalyze the direct transfer of ubiquitin from E2 ubiquitin-conjugating enzyme to a specific substrate. Within MAGE-RING ubiquitin ligase complex, MAGE stimulates and specifies ubiquitin ligase activity likely through recruitment and/or stabilization of the E2 ubiquitin-conjugating enzyme at the E3:substrate complex. Involved in maintenance of genome integrity, DNA damage response and DNA repair. In Xenopus tropicalis (Western clawed frog), this protein is Non-structural maintenance of chromosomes element 1 homolog (nsmce1).